A 68-amino-acid chain; its full sequence is Protein P34 (68 aa).

Transmembrane regions (helical) follow at residues 4–24 (FVGP…LAVL) and 41–61 (GFSS…GFAM).

The protein resides in the virion membrane. The sequence is that of Protein P34 (XXXIV) from Acinetobacter calcoaceticus (Arthrobacter siderocapsulatus).